The primary structure comprises 147 residues: Large ribosomal subunit protein uL16 (147 aa).

This sequence belongs to the universal ribosomal protein uL16 family. In terms of assembly, part of the 50S ribosomal subunit.

Binds 23S rRNA and is also seen to make contacts with the A and possibly P site tRNAs. The sequence is that of Large ribosomal subunit protein uL16 from Caldicellulosiruptor bescii (strain ATCC BAA-1888 / DSM 6725 / KCTC 15123 / Z-1320) (Anaerocellum thermophilum).